The following is a 459-amino-acid chain: Bifunctional protein GlmU (459 aa).

Positions 1–229 (MTNYAIILAA…FDESLGVNDR (229 aa)) are pyrophosphorylase. UDP-N-acetyl-alpha-D-glucosamine is bound by residues 8 to 11 (LAAG), lysine 22, glutamine 72, and 77 to 78 (GT). A Mg(2+)-binding site is contributed by aspartate 102. Glycine 139, glutamate 154, asparagine 169, and asparagine 227 together coordinate UDP-N-acetyl-alpha-D-glucosamine. Asparagine 227 serves as a coordination point for Mg(2+). Residues 230 to 250 (VALAKAEKVMRRRINHAHMVN) are linker. The tract at residues 251-459 (GVTLTNPAST…KKKPHHPNNK (209 aa)) is N-acetyltransferase. UDP-N-acetyl-alpha-D-glucosamine-binding residues include arginine 332 and lysine 350. Residue histidine 362 is the Proton acceptor of the active site. Tyrosine 365 and asparagine 376 together coordinate UDP-N-acetyl-alpha-D-glucosamine. Residues alanine 379, 385–386 (NY), serine 404, alanine 422, and arginine 439 contribute to the acetyl-CoA site.

This sequence in the N-terminal section; belongs to the N-acetylglucosamine-1-phosphate uridyltransferase family. In the C-terminal section; belongs to the transferase hexapeptide repeat family. Homotrimer. Requires Mg(2+) as cofactor.

It localises to the cytoplasm. It catalyses the reaction alpha-D-glucosamine 1-phosphate + acetyl-CoA = N-acetyl-alpha-D-glucosamine 1-phosphate + CoA + H(+). The catalysed reaction is N-acetyl-alpha-D-glucosamine 1-phosphate + UTP + H(+) = UDP-N-acetyl-alpha-D-glucosamine + diphosphate. The protein operates within nucleotide-sugar biosynthesis; UDP-N-acetyl-alpha-D-glucosamine biosynthesis; N-acetyl-alpha-D-glucosamine 1-phosphate from alpha-D-glucosamine 6-phosphate (route II): step 2/2. It functions in the pathway nucleotide-sugar biosynthesis; UDP-N-acetyl-alpha-D-glucosamine biosynthesis; UDP-N-acetyl-alpha-D-glucosamine from N-acetyl-alpha-D-glucosamine 1-phosphate: step 1/1. It participates in bacterial outer membrane biogenesis; LPS lipid A biosynthesis. In terms of biological role, catalyzes the last two sequential reactions in the de novo biosynthetic pathway for UDP-N-acetylglucosamine (UDP-GlcNAc). The C-terminal domain catalyzes the transfer of acetyl group from acetyl coenzyme A to glucosamine-1-phosphate (GlcN-1-P) to produce N-acetylglucosamine-1-phosphate (GlcNAc-1-P), which is converted into UDP-GlcNAc by the transfer of uridine 5-monophosphate (from uridine 5-triphosphate), a reaction catalyzed by the N-terminal domain. The sequence is that of Bifunctional protein GlmU from Streptococcus mutans serotype c (strain ATCC 700610 / UA159).